The primary structure comprises 309 residues: Minor serine/threonine-protein phosphatase PP2A-1 catalytic subunit (309 aa).

Residues Asp57, His59, Asp85, and Asn117 each coordinate Mn(2+). His118 functions as the Proton donor in the catalytic mechanism. 2 residues coordinate Mn(2+): His167 and His241. A Leucine methyl ester modification is found at Leu309.

It belongs to the PPP phosphatase family. PP-2A subfamily. Mn(2+) is required as a cofactor.

It catalyses the reaction O-phospho-L-seryl-[protein] + H2O = L-seryl-[protein] + phosphate. The enzyme catalyses O-phospho-L-threonyl-[protein] + H2O = L-threonyl-[protein] + phosphate. Functionally, essential role in cell cycle control. PP2A may be involved in controlling the entry into mitosis, possibly acting as an inhibitor. The sequence is that of Minor serine/threonine-protein phosphatase PP2A-1 catalytic subunit (ppa1) from Schizosaccharomyces pombe (strain 972 / ATCC 24843) (Fission yeast).